Consider the following 259-residue polypeptide: DNA adenine methylase (259 aa).

S-adenosyl-L-methionine-binding positions include Tyr-7, Lys-11, Phe-32–Ser-37, Asp-50, His-156–Phe-157, Asp-171, and Tyr-181.

It belongs to the N(4)/N(6)-methyltransferase family. In terms of assembly, monomer.

It catalyses the reaction a 2'-deoxyadenosine in DNA + S-adenosyl-L-methionine = an N(6)-methyl-2'-deoxyadenosine in DNA + S-adenosyl-L-homocysteine + H(+). Functionally, an alpha subtype methylase, recognizes the double-stranded sequence 5'-GATC-3' and methylates A-2. Also acts on 5-hydroxymethylcytosine (hmC)-containing DNA, the normal base in this virus. May prevent degradation of viral DNA by the host restriction-modification antiviral defense system. In Enterobacteria phage T4 (Bacteriophage T4), this protein is DNA adenine methylase.